The following is a 787-amino-acid chain: Transcriptional corepressor LEUNIG_HOMOLOG (787 aa).

A required for SEU-binding region spans residues 1 to 88 (MAQSNWEADK…IEAQQGKAKE (88 aa)). The 33-residue stretch at 8 to 40 (ADKMLDVYIYDYLVKKKLHNTAKSFMTEGKVSP) folds into the LisH domain. The stretch at 77–106 (AYIEAQQGKAKEQQMQIQQLQMMRQAQMQR) forms a coiled coil. Residues 299–413 (NMTNSPMYGG…TPSTHTPVDG (115 aa)) are disordered. Composition is skewed to low complexity over residues 336–346 (SIGSPMQSSSS) and 355–372 (QQSSSQQQDHLLSQQSQQ). The span at 380–409 (PSSSGPANSTGTGNTVGPSNSQPSTPSTHT) shows a compositional bias: polar residues. WD repeat units follow at residues 508–547 (KSASKVICCSFSYDGKLLASAGHDKKVFIWNMETLQVEST), 550–589 (EHAHIITDVRFRPNSTQLATSSFDKTIKIWDASDPGYFLR), 593–633 (GHAA…VRAV), 635–671 (GASTQVRFQPRTGQFLAAASENTVSIFDIENNNKRVN), 675–715 (GHSS…HELS), 717–755 (SGNKFHSVVFHPSYPDLLVIGGYQAIELWNTMENKCMTV), and 757–787 (GHECVISALAQSPSTGVVASASHDKSVKIWK).

As to quaternary structure, forms corepressor complexes with SLK1 and SLK2; LUH is the transcription repressor subunit and SLK1 and SLK2 the specific DNA-binding adapters. Interacts with SEU. Binds to YAB3, YAB5 and YAB1/FIL; these complexes promote adaxial cell identity in leaves as well as embryonic shoot apical meristem (SAM) initiation and postembryonic SAM maintenance. In terms of tissue distribution, expressed in roots, stems, leaves, seedlings, apex, flowers, siliques, flower organs and seeds (including seed coat).

Its subcellular location is the nucleus. Functionally, transcription repressor subunit of the SEU-SLK1 and SEU-SLK2 transcriptional corepressor of abiotic stress (e.g. salt and osmotic stress) response genes, by means of an epigenetic process involving histone modification (e.g. H3K9 and H3K14 acetylation), probably by recruiting HDAC, to facilitate the condensation of chromatin thus preventing transcription at the target genes. Can also act as a transcription activator. Implicated in embryo and floral development. Involved in post-synthesis cell wall modifications necessary for mucilage extrusion from seeds upon imbibition, probably by promoting the expression of genes required for mucilage maturation (e.g. MUM2). Regulates the maintenance on leaf polarity and meristem activity as well as the initiation of embryonic shoot apical meristem (SAM) development. This chain is Transcriptional corepressor LEUNIG_HOMOLOG, found in Arabidopsis thaliana (Mouse-ear cress).